The following is a 275-amino-acid chain: Phosphite import ATP-binding protein PxtA (275 aa).

The region spanning 11-252 (LRVDRLSVVY…QLERIYAGRS (242 aa)) is the ABC transporter domain. Residue 44-51 (GLSGAGKS) participates in ATP binding. A disordered region spans residues 251-275 (RSTTQPANAPAEPPVMLEPSLEMSR).

This sequence belongs to the ABC transporter superfamily. Phosphonates importer (TC 3.A.1.9.1) family. The complex is composed of two ATP-binding proteins (PtxA), two transmembrane proteins (PtxC) and a solute-binding protein (PtxB).

It localises to the cell inner membrane. It catalyses the reaction phosphite(out) + ATP + H2O = phosphite(in) + ADP + phosphate + H(+). Part of the ABC transporter complex PtxABC involved in phosphite import. Responsible for energy coupling to the transport system. The protein is Phosphite import ATP-binding protein PxtA (ptxA) of Stutzerimonas stutzeri (Pseudomonas stutzeri).